The sequence spans 115 residues: uncharacterized protein (115 aa).

The next 3 membrane-spanning stretches (helical) occupy residues 10-30 (IAIL…SFWL), 47-67 (ASGI…ATVA), and 77-97 (VHFF…AIIV).

The protein localises to the cell membrane. This is an uncharacterized protein from Mycoplasma genitalium (strain ATCC 33530 / DSM 19775 / NCTC 10195 / G37) (Mycoplasmoides genitalium).